We begin with the raw amino-acid sequence, 426 residues long: Probable imidazolonepropionase (426 aa).

Tyrosine 158 and histidine 192 together coordinate 4-imidazolone-5-propanoate. Tyrosine 158 is an N-formimidoyl-L-glutamate binding site. Histidine 260 is a Fe(3+) binding site. Position 260 (histidine 260) interacts with Zn(2+). Glutamate 263 is a binding site for 4-imidazolone-5-propanoate. Aspartate 334 is a binding site for Fe(3+). Aspartate 334 serves as a coordination point for Zn(2+). Asparagine 336 contributes to the N-formimidoyl-L-glutamate binding site.

Belongs to the metallo-dependent hydrolases superfamily. HutI family. Zn(2+) serves as cofactor. It depends on Fe(3+) as a cofactor.

It catalyses the reaction 4-imidazolone-5-propanoate + H2O = N-formimidoyl-L-glutamate. It functions in the pathway amino-acid degradation; L-histidine degradation into L-glutamate; N-formimidoyl-L-glutamate from L-histidine: step 3/3. This Dictyostelium discoideum (Social amoeba) protein is Probable imidazolonepropionase (amdhd1).